The following is a 348-amino-acid chain: Alcohol dehydrogenase 1 (348 aa).

N-acetylserine is present on serine 2. Residue cysteine 44 coordinates Zn(2+). NAD(+) contacts are provided by histidine 45, threonine 46, and histidine 49. Zn(2+)-binding residues include histidine 67, glutamate 68, cysteine 98, cysteine 101, cysteine 104, cysteine 112, and cysteine 154. Positions 181, 182, 183, 202, and 207 each coordinate NAD(+). Serine 213 bears the Phosphoserine mark. Phenylalanine 222 is an NAD(+) binding site. Phosphothreonine is present on threonine 223. Glycyl lysine isopeptide (Lys-Gly) (interchain with G-Cter in ubiquitin) cross-links involve residues lysine 226 and lysine 234. NAD(+) contacts are provided by valine 269 and methionine 271. Residue serine 279 is modified to Phosphoserine. Lysine 287 participates in a covalent cross-link: Glycyl lysine isopeptide (Lys-Gly) (interchain with G-Cter in ubiquitin). Serine 294 and valine 296 together coordinate NAD(+). Position 316 is a phosphoserine (serine 316). Lysine 319 participates in a covalent cross-link: Glycyl lysine isopeptide (Lys-Gly) (interchain with G-Cter in ubiquitin). An NAD(+)-binding site is contributed by arginine 341.

The protein belongs to the zinc-containing alcohol dehydrogenase family. In terms of assembly, homotetramer. Zn(2+) is required as a cofactor.

The protein localises to the cytoplasm. The enzyme catalyses a primary alcohol + NAD(+) = an aldehyde + NADH + H(+). It carries out the reaction a secondary alcohol + NAD(+) = a ketone + NADH + H(+). It catalyses the reaction ethanol + NAD(+) = acetaldehyde + NADH + H(+). The catalysed reaction is allyl alcohol + NADP(+) = acrolein + NADPH + H(+). The enzyme catalyses 1-propanol + NAD(+) = propanal + NADH + H(+). It carries out the reaction butan-1-ol + NAD(+) = butanal + NADH + H(+). It catalyses the reaction hexan-1-ol + NAD(+) = hexanal + NADH + H(+). The catalysed reaction is (R)-lactaldehyde + NAD(+) = methylglyoxal + NADH + H(+). The enzyme catalyses octan-1-ol + NAD(+) = octanal + NADH + H(+). It carries out the reaction butan-2-ol + NAD(+) = butan-2-one + NADH + H(+). It catalyses the reaction propan-2-ol + NAD(+) = acetone + NADH + H(+). The catalysed reaction is isobutanol + NAD(+) = 2-methylpropanal + NADH + H(+). Its function is as follows. Preferentially fermentative isozyme that reduces acetaldehyde to ethanol during the fermentation of glucose. Major enzyme required for the conversion of acetaldehyde to ethanol. Plays a key role in the carbohydrate metabolism through the regeneration of NAD(+) from glycolytic NADH. In the reverse reaction, preferentially catalyzes the conversion of primary unbranched alcohols to their corresponding aldehydes. Also shows activity toward secondary alcohols. Most active with ethanol, and its activity decreases as the size of the alcohol is increased. The polypeptide is Alcohol dehydrogenase 1 (ADH1) (Saccharomyces cerevisiae (strain ATCC 204508 / S288c) (Baker's yeast)).